A 199-amino-acid chain; its full sequence is Guanylate kinase (199 aa).

One can recognise a Guanylate kinase-like domain in the interval 20–198; the sequence is GKLIVLTGPS…ALQAIEVALF (179 aa). 27–34 is a binding site for ATP; sequence GPSGVGKG.

Belongs to the guanylate kinase family.

It localises to the cytoplasm. The catalysed reaction is GMP + ATP = GDP + ADP. Essential for recycling GMP and indirectly, cGMP. The protein is Guanylate kinase of Trichormus variabilis (strain ATCC 29413 / PCC 7937) (Anabaena variabilis).